We begin with the raw amino-acid sequence, 275 residues long: Penicillin-insensitive murein endopeptidase (275 aa).

Residues 1–19 (MKNWIVGMVALVTMVPVMA) form the signal peptide. Cystine bridges form between Cys-44/Cys-264, Cys-187/Cys-235, and Cys-216/Cys-223. Positions 110, 113, 120, 147, and 211 each coordinate Zn(2+). Positions 227–262 (DTPPPGDGCGAELESWFQPPPPSAKPGKTLPPPLPP) are disordered. A compositionally biased stretch (pro residues) spans 244 to 262 (QPPPPSAKPGKTLPPPLPP).

The protein belongs to the peptidase M74 family. As to quaternary structure, dimer. Zn(2+) serves as cofactor.

It localises to the periplasm. Functionally, murein endopeptidase that cleaves the D-alanyl-meso-2,6-diamino-pimelyl amide bond that connects peptidoglycan strands. Likely plays a role in the removal of murein from the sacculus. The chain is Penicillin-insensitive murein endopeptidase from Yersinia pestis bv. Antiqua (strain Antiqua).